The following is a 197-amino-acid chain: COMM domain-containing protein 6 (197 aa).

A COMM domain is found at 130–197 (ELVDFHWKIG…KEMSAVLETV (68 aa)).

Belongs to the COMM domain-containing protein 6 family. Component of the commander complex consisting of the CCC subcomplex and the retriever subcomplex. Component of the CCC subcomplex.

The protein resides in the nucleus. It localises to the cytoplasm. Functionally, scaffold protein in the commander complex that is essential for endosomal recycling of transmembrane cargos; the commander complex is composed of the CCC subcomplex and the retriever subcomplex. May modulate activity of cullin-RING E3 ubiquitin ligase (CRL) complexes. Down-regulates activation of NF-kappa-B. Inhibits TNF-induced NFKB1 activation. The polypeptide is COMM domain-containing protein 6 (commd6) (Xenopus laevis (African clawed frog)).